The chain runs to 75 residues: Putative antitoxin PH1062.1 (75 aa).

Belongs to the UPF0330 family.

In terms of biological role, possibly the antitoxin component of a type II toxin-antitoxin (TA) system. This Pyrococcus horikoshii (strain ATCC 700860 / DSM 12428 / JCM 9974 / NBRC 100139 / OT-3) protein is Putative antitoxin PH1062.1.